We begin with the raw amino-acid sequence, 105 residues long: uncharacterized protein (105 aa).

This is an uncharacterized protein from Homo sapiens (Human).